We begin with the raw amino-acid sequence, 1081 residues long: Zinc finger protein 827 (1081 aa).

A compositionally biased stretch (basic and acidic residues) spans 1 to 10 (MPRRKQEQPK). The segment at 1 to 14 (MPRRKQEQPKRLPS) is mediates direct interaction with RBBP4. The tract at residues 1–77 (MPRRKQEQPK…DTSLGSTTPS (77 aa)) is disordered. Positions 3 to 5 (RRK) match the RRK motif; mediates NuRD recruitment to telomeres motif. Polar residues predominate over residues 62-77 (EQSTSPDTSLGSTTPS). Glycyl lysine isopeptide (Lys-Gly) (interchain with G-Cter in SUMO2) cross-links involve residues K176, K216, and K226. Disordered stretches follow at residues 259 to 278 (KVSE…ASSF) and 307 to 348 (SSLL…SLEL). Residues 327-344 (VTPPPPPPPPPPPPPPPQ) show a composition bias toward pro residues. Residues K360 and K372 each participate in a glycyl lysine isopeptide (Lys-Gly) (interchain with G-Cter in SUMO2) cross-link. 3 C2H2-type zinc fingers span residues 374–396 (FQCP…MVIH), 402–424 (HQCP…MKVH), and 433–455 (FQCQ…MRCH). Residues K466, K475, K523, K549, K580, K587, K597, K634, K639, and K658 each participate in a glycyl lysine isopeptide (Lys-Gly) (interchain with G-Cter in SUMO2) cross-link. Residue K673 forms a Glycyl lysine isopeptide (Lys-Gly) (interchain with G-Cter in SUMO1); alternate linkage. K673 is covalently cross-linked (Glycyl lysine isopeptide (Lys-Gly) (interchain with G-Cter in SUMO2); alternate). Residues K704, K710, K742, K778, and K798 each participate in a glycyl lysine isopeptide (Lys-Gly) (interchain with G-Cter in SUMO2) cross-link. C2H2-type zinc fingers lie at residues 817–839 (FPCD…LSLH) and 845–867 (YKCH…LTVH). Glycyl lysine isopeptide (Lys-Gly) (interchain with G-Cter in SUMO2) cross-links involve residues K870 and K891. 2 C2H2-type zinc fingers span residues 897-919 (YSCH…MSLH) and 929-952 (ICCT…GTKH). A compositionally biased stretch (basic and acidic residues) spans 947-960 (HIGTKHTGEDRKTP). The disordered stretch occupies residues 947-996 (HIGTKHTGEDRKTPSESNSPSSSSLSALSDSANSKDDSDGSQKNKGGNNL). K958 is covalently cross-linked (Glycyl lysine isopeptide (Lys-Gly) (interchain with G-Cter in SUMO2)). The span at 961–978 (SESNSPSSSSLSALSDSA) shows a compositional bias: low complexity. A compositionally biased stretch (basic and acidic residues) spans 979–988 (NSKDDSDGSQ). K1014 participates in a covalent cross-link: Glycyl lysine isopeptide (Lys-Gly) (interchain with G-Cter in SUMO2). 2 consecutive C2H2-type zinc fingers follow at residues 1019 to 1041 (FECV…LQIH) and 1047 to 1069 (FECD…KKCH).

It belongs to the krueppel C2H2-type zinc-finger protein family. As to quaternary structure, part of a transcription inhibitory ribonucleoprotein complex composed at least of the circular RNA circZNF827, HNRNPK and HNRNPL. Interacts with the nucleosome remodeling and histone deacetylase/NuRD complex. Interacts with RBBP4; the interaction is direct and recruits RBBP4, a component of the NuRD complex, to telomeres.

The protein localises to the nucleus. It localises to the chromosome. Its subcellular location is the telomere. In terms of biological role, as part of a ribonucleoprotein complex composed at least of HNRNPK, HNRNPL and the circular RNA circZNF827 that nucleates the complex on chromatin, may negatively regulate the transcription of genes involved in neuronal differentiation. Could also recruit the nucleosome remodeling and histone deacetylase/NuRD complex to telomeric regions of chromosomes to regulate chromatin remodeling as part of telomere maintenance. This is Zinc finger protein 827 (ZNF827) from Homo sapiens (Human).